The primary structure comprises 211 residues: Imidazole glycerol phosphate synthase subunit HisH (211 aa).

A Glutamine amidotransferase type-1 domain is found at 1 to 206 (MIGIIDYGRG…GKWVNEDATV (206 aa)). Catalysis depends on cysteine 79, which acts as the Nucleophile. Active-site residues include histidine 181 and glutamate 183.

In terms of assembly, heterodimer of HisH and HisF.

It is found in the cytoplasm. It carries out the reaction 5-[(5-phospho-1-deoxy-D-ribulos-1-ylimino)methylamino]-1-(5-phospho-beta-D-ribosyl)imidazole-4-carboxamide + L-glutamine = D-erythro-1-(imidazol-4-yl)glycerol 3-phosphate + 5-amino-1-(5-phospho-beta-D-ribosyl)imidazole-4-carboxamide + L-glutamate + H(+). The enzyme catalyses L-glutamine + H2O = L-glutamate + NH4(+). Its pathway is amino-acid biosynthesis; L-histidine biosynthesis; L-histidine from 5-phospho-alpha-D-ribose 1-diphosphate: step 5/9. IGPS catalyzes the conversion of PRFAR and glutamine to IGP, AICAR and glutamate. The HisH subunit catalyzes the hydrolysis of glutamine to glutamate and ammonia as part of the synthesis of IGP and AICAR. The resulting ammonia molecule is channeled to the active site of HisF. In Desulfitobacterium hafniense (strain Y51), this protein is Imidazole glycerol phosphate synthase subunit HisH.